Consider the following 601-residue polypeptide: A-type ATP synthase subunit A (601 aa).

236–243 serves as a coordination point for ATP; sequence GPFGSGKT.

The protein belongs to the ATPase alpha/beta chains family. As to quaternary structure, has multiple subunits with at least A(3), B(3), C, D, E, F, H, I and proteolipid K(x).

The protein resides in the cell membrane. The enzyme catalyses ATP + H2O + 4 H(+)(in) = ADP + phosphate + 5 H(+)(out). In terms of biological role, component of the A-type ATP synthase that produces ATP from ADP in the presence of a proton gradient across the membrane. The A chain is the catalytic subunit. This is A-type ATP synthase subunit A from Hyperthermus butylicus (strain DSM 5456 / JCM 9403 / PLM1-5).